The chain runs to 383 residues: Probable lipid transporter atnI (383 aa).

A run of 2 helical transmembrane segments spans residues 46 to 66 (VLFS…AIMF) and 71 to 91 (AWVV…RSLF). The N-linked (GlcNAc...) asparagine glycan is linked to asparagine 94. 5 consecutive transmembrane segments (helical) span residues 104–124 (FTIF…MTLG), 144–164 (FGHI…VGAA), 182–202 (IYMG…GLFI), 231–251 (WLFY…IFRL), and 269–289 (WFEY…LNVA). The tract at residues 305–383 (VSRKEKKQRK…YDNRGNEVRP (79 aa)) is disordered. A compositionally biased stretch (basic residues) spans 307-316 (RKEKKQRKRE). Basic and acidic residues predominate over residues 317–329 (KKEAKIAEKEAKK).

The protein belongs to the lipid-translocating exporter (LTE) (TC 9.A.26.1) family.

It is found in the membrane. The protein operates within secondary metabolite biosynthesis. In terms of biological role, probable lipid transporter; part of the gene cluster that mediates the biosynthesis of aspercryptins, linear lipopeptides built from six amino acids including 2 highly unusual and nonproteogenic amino acids, 2-amino-octanoic acid (2aoa) and 2-amino-dodecanol (2adol). The core structure of aspercryptins is as follows: Ser/Ala-Thr-Ile/Val-2aoa-Asn-2adol. The first step of aspercryptin biosynthesis is the generation of the fatty acid precursors, octanoic and dodecanoic acids, by the FAS subunits atnF and atnM. The fatty acid precursors are likely transformed into the corresponding alpha-amino fatty acids in three steps. First, they are hydroxylated by the cytochrome P450 monooxygenase atnE, then oxidized to the corresponding alpha-keto acids by the NAD(P)-dependent oxidoreductase atnD, and finally converted to the alpha-amino fatty acids by the PLP-dependent aminotransferases atnH or atnJ. the alpha-amino fatty acids, 2-amino-octanoic and 2-amino-dodecanoic acids, are recognized, activated, and covalently tethered to the NRPS atnA by its fourth and sixth adenylation domains. The second module of atnA is the Thr module and contains an epimerase (E) domain responsible for the epimerization of Thr to D-allo-Thr. Additionally, despite atnA having only one epimerase domain, the first amino acid of aspercryptin A1 is D-Ser, suggesting that serine is either loaded directly as D-Ser on the first module or that the epimerase domain in the threonine module epimerizes both L-Ser and L-Thr. After condensation of the hexapeptide of aspercryptin, the C-terminal reductase (TE) domain might be involved in the reductive release and production of the aldehyde hexapeptide. Further reduction would generate aspercryptins. The variety of aspercryptins produced reflects the flexibility of the atnA NRPS, allowing incorporation of alanine instead of serine, valine for isoleucine, and a C10 fatty amino alcohol instead of the C12 version. AtnB seems to be involved in the selectivity for Ile versus Val by the third module. Moreover, type B, C and D aspercryptins have an additional N-terminal cichorine, acetyl and propionyl group respectively. In Emericella nidulans (strain FGSC A4 / ATCC 38163 / CBS 112.46 / NRRL 194 / M139) (Aspergillus nidulans), this protein is Probable lipid transporter atnI.